Reading from the N-terminus, the 742-residue chain is Phosphoribosylformylglycinamidine synthase subunit PurL (742 aa).

The active site involves H54. Residues Y57 and K96 each coordinate ATP. Residue E98 coordinates Mg(2+). Residues 99 to 102 (SHNH) and R121 each bind substrate. H100 serves as the catalytic Proton acceptor. Position 122 (D122) interacts with Mg(2+). Residue Q245 participates in substrate binding. D273 lines the Mg(2+) pocket. A substrate-binding site is contributed by 317–319 (ESQ). Positions 500 and 537 each coordinate ATP. Position 538 (N538) interacts with Mg(2+). Substrate is bound at residue S540.

The protein belongs to the FGAMS family. Monomer. Part of the FGAM synthase complex composed of 1 PurL, 1 PurQ and 2 PurS subunits.

Its subcellular location is the cytoplasm. The enzyme catalyses N(2)-formyl-N(1)-(5-phospho-beta-D-ribosyl)glycinamide + L-glutamine + ATP + H2O = 2-formamido-N(1)-(5-O-phospho-beta-D-ribosyl)acetamidine + L-glutamate + ADP + phosphate + H(+). The protein operates within purine metabolism; IMP biosynthesis via de novo pathway; 5-amino-1-(5-phospho-D-ribosyl)imidazole from N(2)-formyl-N(1)-(5-phospho-D-ribosyl)glycinamide: step 1/2. Functionally, part of the phosphoribosylformylglycinamidine synthase complex involved in the purines biosynthetic pathway. Catalyzes the ATP-dependent conversion of formylglycinamide ribonucleotide (FGAR) and glutamine to yield formylglycinamidine ribonucleotide (FGAM) and glutamate. The FGAM synthase complex is composed of three subunits. PurQ produces an ammonia molecule by converting glutamine to glutamate. PurL transfers the ammonia molecule to FGAR to form FGAM in an ATP-dependent manner. PurS interacts with PurQ and PurL and is thought to assist in the transfer of the ammonia molecule from PurQ to PurL. The sequence is that of Phosphoribosylformylglycinamidine synthase subunit PurL from Geobacillus sp. (strain WCH70).